The sequence spans 192 residues: 7-methyl-GTP pyrophosphatase (192 aa).

The active-site Proton acceptor is D69.

It belongs to the Maf family. YceF subfamily. The cofactor is a divalent metal cation.

The protein resides in the cytoplasm. The catalysed reaction is N(7)-methyl-GTP + H2O = N(7)-methyl-GMP + diphosphate + H(+). Nucleoside triphosphate pyrophosphatase that hydrolyzes 7-methyl-GTP (m(7)GTP). May have a dual role in cell division arrest and in preventing the incorporation of modified nucleotides into cellular nucleic acids. The polypeptide is 7-methyl-GTP pyrophosphatase (Pseudomonas aeruginosa (strain ATCC 15692 / DSM 22644 / CIP 104116 / JCM 14847 / LMG 12228 / 1C / PRS 101 / PAO1)).